The chain runs to 75 residues: Cytochrome c oxidase assembly factor 5 (75 aa).

The CHCH domain occupies 28–66 (QTDCVLQEGKSPKECLKEGYCKALQVTFFECKRSILDTR). A Cx10C motif motif is present at residues 31–42 (CVLQEGKSPKEC). 2 disulfide bridges follow: Cys31–Cys58 and Cys42–Cys48. Positions 48-58 (CKALQVTFFEC) match the Cx9C motif motif.

This sequence belongs to the PET191 family.

Its function is as follows. Involved in an early step of the mitochondrial complex IV assembly process. The sequence is that of Cytochrome c oxidase assembly factor 5 (coa5) from Xenopus tropicalis (Western clawed frog).